A 96-amino-acid chain; its full sequence is ATP-dependent Clp protease adapter protein ClpS (96 aa).

Belongs to the ClpS family. In terms of assembly, binds to the N-terminal domain of the chaperone ClpA.

Its function is as follows. Involved in the modulation of the specificity of the ClpAP-mediated ATP-dependent protein degradation. This chain is ATP-dependent Clp protease adapter protein ClpS, found in Streptomyces coelicolor (strain ATCC BAA-471 / A3(2) / M145).